Here is a 418-residue protein sequence, read N- to C-terminus: 3-isopropylmalate dehydratase large subunit (418 aa).

3 residues coordinate [4Fe-4S] cluster: cysteine 299, cysteine 359, and cysteine 362.

Belongs to the aconitase/IPM isomerase family. LeuC type 2 subfamily. As to quaternary structure, heterodimer of LeuC and LeuD. It depends on [4Fe-4S] cluster as a cofactor.

The catalysed reaction is (2R,3S)-3-isopropylmalate = (2S)-2-isopropylmalate. It functions in the pathway amino-acid biosynthesis; L-leucine biosynthesis; L-leucine from 3-methyl-2-oxobutanoate: step 2/4. Catalyzes the isomerization between 2-isopropylmalate and 3-isopropylmalate, via the formation of 2-isopropylmaleate. The polypeptide is 3-isopropylmalate dehydratase large subunit (Oleidesulfovibrio alaskensis (strain ATCC BAA-1058 / DSM 17464 / G20) (Desulfovibrio alaskensis)).